We begin with the raw amino-acid sequence, 397 residues long: Elongation factor Tu (397 aa).

Positions 10 to 207 constitute a tr-type G domain; sequence KPHVNIGTIG…ACDSYIEEPE (198 aa). The tract at residues 19–26 is G1; the sequence is GHIDHGKT. 19–26 contributes to the GTP binding site; the sequence is GHIDHGKT. Thr26 contacts Mg(2+). The interval 60 to 64 is G2; the sequence is GITIA. Residues 81–84 are G3; the sequence is DCPG. Residues 81–85 and 136–139 contribute to the GTP site; these read DCPGH and NKCD. The tract at residues 136 to 139 is G4; that stretch reads NKCD. The tract at residues 174–176 is G5; sequence SAL.

It belongs to the TRAFAC class translation factor GTPase superfamily. Classic translation factor GTPase family. EF-Tu/EF-1A subfamily. As to quaternary structure, monomer.

It localises to the cytoplasm. The catalysed reaction is GTP + H2O = GDP + phosphate + H(+). Its function is as follows. GTP hydrolase that promotes the GTP-dependent binding of aminoacyl-tRNA to the A-site of ribosomes during protein biosynthesis. This chain is Elongation factor Tu, found in Maridesulfovibrio salexigens (strain ATCC 14822 / DSM 2638 / NCIMB 8403 / VKM B-1763) (Desulfovibrio salexigens).